An 89-amino-acid polypeptide reads, in one-letter code: Small ribosomal subunit protein uS15 (89 aa).

Belongs to the universal ribosomal protein uS15 family. Part of the 30S ribosomal subunit. Forms a bridge to the 50S subunit in the 70S ribosome, contacting the 23S rRNA.

Its function is as follows. One of the primary rRNA binding proteins, it binds directly to 16S rRNA where it helps nucleate assembly of the platform of the 30S subunit by binding and bridging several RNA helices of the 16S rRNA. Forms an intersubunit bridge (bridge B4) with the 23S rRNA of the 50S subunit in the ribosome. This chain is Small ribosomal subunit protein uS15, found in Shewanella piezotolerans (strain WP3 / JCM 13877).